An 83-amino-acid chain; its full sequence is Cytochrome b559 subunit alpha (83 aa).

Residues 21–35 (VIHSITIPSLFIAGW) traverse the membrane as a helical segment. Residue histidine 23 participates in heme binding.

It belongs to the PsbE/PsbF family. In terms of assembly, heterodimer of an alpha subunit and a beta subunit. PSII is composed of 1 copy each of membrane proteins PsbA, PsbB, PsbC, PsbD, PsbE, PsbF, PsbH, PsbI, PsbJ, PsbK, PsbL, PsbM, PsbT, PsbX, PsbY, PsbZ, Psb30/Ycf12, at least 3 peripheral proteins of the oxygen-evolving complex and a large number of cofactors. It forms dimeric complexes. The cofactor is heme b.

The protein localises to the plastid. It localises to the chloroplast thylakoid membrane. Its function is as follows. This b-type cytochrome is tightly associated with the reaction center of photosystem II (PSII). PSII is a light-driven water:plastoquinone oxidoreductase that uses light energy to abstract electrons from H(2)O, generating O(2) and a proton gradient subsequently used for ATP formation. It consists of a core antenna complex that captures photons, and an electron transfer chain that converts photonic excitation into a charge separation. The protein is Cytochrome b559 subunit alpha of Helianthus annuus (Common sunflower).